The following is a 61-amino-acid chain: Probable pancreatic secretory proteinase inhibitor (61 aa).

The 56-residue stretch at 6-61 (LYRKPSCGEMSAMHACPMNFAPVCGTDGNTYPNECSLCFQRQNTKTDILITKDDRC) folds into the Kazal-like domain. Cystine bridges form between Cys12-Cys43, Cys21-Cys40, and Cys29-Cys61.

It is found in the secreted. This chain is Probable pancreatic secretory proteinase inhibitor, found in Anguilla anguilla (European freshwater eel).